A 310-amino-acid polypeptide reads, in one-letter code: Olfactory receptor 9A2 (310 aa).

Topologically, residues 1–24 are extracellular; that stretch reads MMDNHSSATEFHLLGFPGSQGLHH. N-linked (GlcNAc...) asparagine glycosylation occurs at N4. A helical transmembrane segment spans residues 25 to 45; it reads ILFAIFFFFYLVTLMGNTVII. The Cytoplasmic portion of the chain corresponds to 46–53; it reads VIVCVDKR. Residues 54-74 form a helical membrane-spanning segment; that stretch reads LQSPMYFFLSHLSTLEILVTT. The Extracellular segment spans residues 75-98; sequence IIVPMMLWGLLFLGCRQYLSLHVS. Over 117–135 the chain is Cytoplasmic; it reads DRYVAVCNPLRYNIIMNSS. Residues 136-156 traverse the membrane as a helical segment; it reads TCIWVVIVSWVFGFLSEIWPI. The Extracellular portion of the chain corresponds to 157–193; that stretch reads YATFQFTFRKSNSLDHFYCDRGQLLKLSCDNTLLTEF. The chain crosses the membrane as a helical span at residues 194–213; the sequence is ILFLMAVFILIGSLIPTIVS. Residues 214-233 lie on the Cytoplasmic side of the membrane; that stretch reads YTYIISTILKIPSASGRRKA. The chain crosses the membrane as a helical span at residues 234–254; sequence FSTFASHFTCVVIGYGSCLFL. Residues 255-267 are Extracellular-facing; sequence YVKPKQTQGVEYN. Residues 268 to 288 form a helical membrane-spanning segment; the sequence is KIVSLLVSVLTPFLNPFIFTL. The Cytoplasmic segment spans residues 289–310; the sequence is RNDKVKEALRDGMKRCCQLLKD.

The protein belongs to the G-protein coupled receptor 1 family.

It is found in the cell membrane. Functionally, odorant receptor. This is Olfactory receptor 9A2 (OR9A2) from Homo sapiens (Human).